Consider the following 465-residue polypeptide: Probable zinc metalloprotease PTT_17836 (465 aa).

An N-terminal signal peptide occupies residues 1-20 (MRSASTLAVCAATLLQIACS). A glycan (N-linked (GlcNAc...) asparagine) is linked at Asn140. 3 residues coordinate Zn(2+): His163, Asp183, and Glu216. Asn231 carries N-linked (GlcNAc...) asparagine glycosylation. Asp243 provides a ligand contact to Zn(2+). N-linked (GlcNAc...) asparagine glycans are attached at residues Asn272, Asn330, Asn378, Asn384, Asn421, and Asn426. Positions 371-464 (APTNVGVNTT…LPFPFGCARN (94 aa)) constitute a Fibronectin type-III domain.

It belongs to the peptidase M28 family. M28B subfamily. The cofactor is Zn(2+).

The protein resides in the secreted. This is Probable zinc metalloprotease PTT_17836 from Pyrenophora teres f. teres (strain 0-1) (Barley net blotch fungus).